Here is a 202-residue protein sequence, read N- to C-terminus: IMP cyclohydrolase (202 aa).

It belongs to the archaeal IMP cyclohydrolase family.

The enzyme catalyses IMP + H2O = 5-formamido-1-(5-phospho-D-ribosyl)imidazole-4-carboxamide. It participates in purine metabolism; IMP biosynthesis via de novo pathway; IMP from 5-formamido-1-(5-phospho-D-ribosyl)imidazole-4-carboxamide: step 1/1. Its function is as follows. Catalyzes the cyclization of 5-formylamidoimidazole-4-carboxamide ribonucleotide to IMP. This is IMP cyclohydrolase from Methanothermobacter thermautotrophicus (strain ATCC 29096 / DSM 1053 / JCM 10044 / NBRC 100330 / Delta H) (Methanobacterium thermoautotrophicum).